Here is a 253-residue protein sequence, read N- to C-terminus: uncharacterized protein (253 aa).

Belongs to the A.longa ORF167/ORF288 family.

The protein resides in the plastid. This is an uncharacterized protein from Euglena longa (Euglenophycean alga).